The chain runs to 340 residues: Adenosine deaminase-like protein (340 aa).

His-14 and His-16 together coordinate Zn(2+). Residues His-16, Asn-18, His-68, 100–103 (TTPK), and Gly-173 contribute to the N(6)-methyl-AMP site. His-200 contacts Zn(2+). N(6)-methyl-AMP contacts are provided by Glu-203, Asp-278, and Asp-279. The active-site Proton donor is the Glu-203. Asp-278 is a Zn(2+) binding site.

The protein belongs to the metallo-dependent hydrolases superfamily. Adenosine and AMP deaminases family. Monomer. Requires Zn(2+) as cofactor.

The catalysed reaction is N(6)-methyl-AMP + H2O + H(+) = IMP + methylamine. Its function is as follows. Catalyzes the hydrolysis of the free cytosolic methylated adenosine nucleotide N(6)-methyl-AMP (N6-mAMP) to produce inositol monophosphate (IMP) and methylamine. Is required for the catabolism of cytosolic N6-mAMP, which is derived from the degradation of mRNA containing N6-methylated adenine (m6A). The polypeptide is Adenosine deaminase-like protein (Drosophila pseudoobscura pseudoobscura (Fruit fly)).